Consider the following 633-residue polypeptide: GTPase-activating protein GYP3 (633 aa).

Residues 26–127 (AFTVKSPSVP…HSDDLDLVPD (102 aa)) form a disordered region. A compositionally biased stretch (basic and acidic residues) spans 37-47 (FHDKMHSDHSS). The segment covering 99 to 115 (GEDDDDNNGDNGNEDLE) has biased composition (acidic residues). The residue at position 147 (Ser147) is a Phosphoserine. The 234-residue stretch at 223–456 (GIPAEWRGNA…RIWDCLFYEE (234 aa)) folds into the Rab-GAP TBC domain. The residue at position 484 (Ser484) is a Phosphoserine.

Its subcellular location is the cytoplasm. The protein localises to the bud. The protein resides in the bud neck. Functionally, regulates exocytosis by functioning as a GAP for SEC4. Stimulates specifically the GTPase activity of YPT6. Also required for efficient polarization of the actin patches. The protein is GTPase-activating protein GYP3 (MSB3) of Saccharomyces cerevisiae (strain ATCC 204508 / S288c) (Baker's yeast).